We begin with the raw amino-acid sequence, 56 residues long: uncharacterized protein (56 aa).

This is an uncharacterized protein from Lepidoptera (butterflies and moths).